The following is a 420-amino-acid chain: MAP kinase-interacting serine/threonine-protein kinase 1 (420 aa).

The tract at residues 1 to 25 is disordered; the sequence is MGSSEPIPIAESDKRKKKKRKARAT. Residue serine 27 is modified to Phosphoserine; by PAK2. The Protein kinase domain maps to 37–321; that stretch reads KLTSELLGEG…AAQVLQHPWV (285 aa). Residues 43 to 51 and lysine 66 contribute to the ATP site; that span reads LGEGANAKV. Aspartate 158 serves as the catalytic Proton acceptor. Phosphoserine is present on residues serine 168 and serine 173. Threonine 197, threonine 202, and threonine 332 each carry phosphothreonine. The segment at 386–420 is disordered; sequence LSPPSKSRLARRRALAQAGRSGDAPPSPTPTTPAP. Positions 400 to 409 are enriched in low complexity; that stretch reads LAQAGRSGDA. The span at 410 to 420 shows a compositional bias: pro residues; the sequence is PPSPTPTTPAP.

Belongs to the protein kinase superfamily. CAMK Ser/Thr protein kinase family. Interacts with the C-terminal regions of EIF4G1 and EIF4G2. Also binds to dephosphorylated ERK1 and ERK2, and to the p38 kinases. Requires Mg(2+) as cofactor. Post-translationally, dual phosphorylation of Thr-197 and Thr-202 activates the kinase. Phosphorylation of Thr-332 activates the kinase. MAPK3/ERK1 is one of the kinases which activate MKNK1/MNK1. Phosphorylation by PAK2 leads to a reduced phosphorylation of EIF4G1.

It carries out the reaction L-seryl-[protein] + ATP = O-phospho-L-seryl-[protein] + ADP + H(+). The enzyme catalyses L-threonyl-[protein] + ATP = O-phospho-L-threonyl-[protein] + ADP + H(+). With respect to regulation, phosphorylated and activated by the p38 kinases and kinases in the Erk pathway. Functionally, may play a role in the response to environmental stress and cytokines. Appears to regulate translation by phosphorylating EIF4E, thus increasing the affinity of this protein for the 7-methylguanosine-containing mRNA cap. This is MAP kinase-interacting serine/threonine-protein kinase 1 (MKNK1) from Bos taurus (Bovine).